A 184-amino-acid chain; its full sequence is Large ribosomal subunit protein uL5 (184 aa).

The protein belongs to the universal ribosomal protein uL5 family. In terms of assembly, part of the 50S ribosomal subunit; part of the 5S rRNA/L5/L18/L25 subcomplex. Contacts the 5S rRNA and the P site tRNA. Forms a bridge to the 30S subunit in the 70S ribosome.

This is one of the proteins that bind and probably mediate the attachment of the 5S RNA into the large ribosomal subunit, where it forms part of the central protuberance. In the 70S ribosome it contacts protein S13 of the 30S subunit (bridge B1b), connecting the 2 subunits; this bridge is implicated in subunit movement. Contacts the P site tRNA; the 5S rRNA and some of its associated proteins might help stabilize positioning of ribosome-bound tRNAs. This chain is Large ribosomal subunit protein uL5, found in Corynebacterium kroppenstedtii (strain DSM 44385 / JCM 11950 / CIP 105744 / CCUG 35717).